We begin with the raw amino-acid sequence, 366 residues long: Peptide chain release factor 1 (366 aa).

At Gln-230 the chain carries N5-methylglutamine. Basic and acidic residues-rich tracts occupy residues 283–293 (ARDAQEARDRA) and 315–328 (VTDH…KNHP). The disordered stretch occupies residues 283-335 (ARDAQEARDRAAQVGSGERSEKIRTYNYPQNRVTDHRLEGDSKNHPLDSVMAG).

Belongs to the prokaryotic/mitochondrial release factor family. Methylated by PrmC. Methylation increases the termination efficiency of RF1.

Its subcellular location is the cytoplasm. In terms of biological role, peptide chain release factor 1 directs the termination of translation in response to the peptide chain termination codons UAG and UAA. The polypeptide is Peptide chain release factor 1 (Deinococcus deserti (strain DSM 17065 / CIP 109153 / LMG 22923 / VCD115)).